Consider the following 276-residue polypeptide: Eukaryotic translation initiation factor 3 subunit G (276 aa).

A Phosphoserine modification is found at S148. Residues 195–274 (TTLKISQLNS…LILHLEWSKK (80 aa)) form the RRM domain.

The protein belongs to the eIF-3 subunit G family. Component of the eukaryotic translation initiation factor 3 (eIF-3) complex.

It is found in the cytoplasm. In terms of biological role, RNA-binding component of the eukaryotic translation initiation factor 3 (eIF-3) complex, which is involved in protein synthesis of a specialized repertoire of mRNAs and, together with other initiation factors, stimulates binding of mRNA and methionyl-tRNAi to the 40S ribosome. The eIF-3 complex specifically targets and initiates translation of a subset of mRNAs involved in cell proliferation. This subunit can bind 18S rRNA. This is Eukaryotic translation initiation factor 3 subunit G from Debaryomyces hansenii (strain ATCC 36239 / CBS 767 / BCRC 21394 / JCM 1990 / NBRC 0083 / IGC 2968) (Yeast).